Consider the following 394-residue polypeptide: Actin-related protein 2 (394 aa).

ATP is bound by residues 160 to 162, 214 to 218, and 305 to 310; these read GDG, RMIKE, and GGSTMY.

The protein belongs to the actin family. ARP2 subfamily. Component of the Arp2/3 complex composed of ACTR2/ARP2, ACTR3/ARP3, ARPC1B/p41-ARC, ARPC2/p34-ARC, ARPC3/p21-ARC, ARPC4/p20-ARC and ARPC5/p16-ARC.

The protein resides in the cytoplasm. It is found in the cytoskeleton. Its subcellular location is the cell projection. The protein localises to the nucleus. Functionally, ATP-binding component of the Arp2/3 complex, a multiprotein complex that mediates actin polymerization upon stimulation by nucleation-promoting factor (NPF). The Arp2/3 complex mediates the formation of branched actin networks in the cytoplasm, providing the force for cell motility. Seems to contact the pointed end of the daughter actin filament. In addition to its role in the cytoplasmic cytoskeleton, the Arp2/3 complex also promotes actin polymerization in the nucleus, thereby regulating gene transcription and repair of damaged DNA. The Arp2/3 complex promotes homologous recombination (HR) repair in response to DNA damage by promoting nuclear actin polymerization, leading to drive motility of double-strand breaks (DSBs). This chain is Actin-related protein 2 (ACTR2), found in Gallus gallus (Chicken).